A 147-amino-acid chain; its full sequence is D-aminoacyl-tRNA deacylase (147 aa).

The Gly-cisPro motif, important for rejection of L-amino acids motif lies at 136–137; sequence GP.

It belongs to the DTD family. As to quaternary structure, homodimer.

It is found in the cytoplasm. It carries out the reaction glycyl-tRNA(Ala) + H2O = tRNA(Ala) + glycine + H(+). The catalysed reaction is a D-aminoacyl-tRNA + H2O = a tRNA + a D-alpha-amino acid + H(+). In terms of biological role, an aminoacyl-tRNA editing enzyme that deacylates mischarged D-aminoacyl-tRNAs. Also deacylates mischarged glycyl-tRNA(Ala), protecting cells against glycine mischarging by AlaRS. Acts via tRNA-based rather than protein-based catalysis; rejects L-amino acids rather than detecting D-amino acids in the active site. By recycling D-aminoacyl-tRNA to D-amino acids and free tRNA molecules, this enzyme counteracts the toxicity associated with the formation of D-aminoacyl-tRNA entities in vivo and helps enforce protein L-homochirality. In Streptococcus equi subsp. equi (strain 4047), this protein is D-aminoacyl-tRNA deacylase.